We begin with the raw amino-acid sequence, 212 residues long: Eukaryotic translation initiation factor 4E-4 (212 aa).

C143 and C147 are joined by a disulfide.

It belongs to the eukaryotic initiation factor 4E family. EIF4F is a multi-subunit complex, the composition of which varies with external and internal environmental conditions. It is composed of at least eIF4A, eIF4E and eIF4G. eIF4E is also known to interact with other partners. As to expression, enriched in somatic cells.

In terms of biological role, recognizes and binds the 7-methylguanosine-containing mRNA cap during an early step in the initiation of protein synthesis and facilitates ribosome binding by inducing the unwinding of the mRNAs secondary structures. All 5 eIF4E proteins bind monomethyl cap structures. Only ife-1, ife-2 and ife-5 bind trimethyl cap structures which result from trans-splicing. Translation of trimethyl cap structure mRNAs may be regulated by intracellular redox state; disulfide bonds change the width and depth of the cap-binding cavity determining selectivity to mRNA caps. This Caenorhabditis elegans protein is Eukaryotic translation initiation factor 4E-4 (ife-4).